The primary structure comprises 679 residues: UvrABC system protein B (679 aa).

A Helicase ATP-binding domain is found at 25-176 (YGVNQGKQYQ…NVRESLRELV (152 aa)). 38–45 (GATGTGKT) lines the ATP pocket. Residues 91–114 (YYDYYQPEAYVPVSDTYIAKTSSV) carry the Beta-hairpin motif. The Helicase C-terminal domain occupies 429-591 (QIDDLLDEIR…IIPKPAGKKP (163 aa)). The region spanning 639 to 674 (PEIIDKLEGKMNLAAEELDFEQAAKLRDRIRQLRKK) is the UVR domain.

The protein belongs to the UvrB family. Forms a heterotetramer with UvrA during the search for lesions. Interacts with UvrC in an incision complex.

The protein localises to the cytoplasm. The UvrABC repair system catalyzes the recognition and processing of DNA lesions. A damage recognition complex composed of 2 UvrA and 2 UvrB subunits scans DNA for abnormalities. Upon binding of the UvrA(2)B(2) complex to a putative damaged site, the DNA wraps around one UvrB monomer. DNA wrap is dependent on ATP binding by UvrB and probably causes local melting of the DNA helix, facilitating insertion of UvrB beta-hairpin between the DNA strands. Then UvrB probes one DNA strand for the presence of a lesion. If a lesion is found the UvrA subunits dissociate and the UvrB-DNA preincision complex is formed. This complex is subsequently bound by UvrC and the second UvrB is released. If no lesion is found, the DNA wraps around the other UvrB subunit that will check the other stand for damage. This Prochlorococcus marinus (strain MIT 9211) protein is UvrABC system protein B.